Consider the following 748-residue polypeptide: Subtilisin-like protease (748 aa).

An N-terminal signal peptide occupies residues 1 to 24; sequence MMKMELRLLVSLIFILCSISMLAA. The Inhibitor I9 domain maps to 37 to 115; the sequence is TYIVHVKKSE…ARPERTLELH (79 aa). The region spanning 122–600 is the Peptidase S8 domain; it reads FLGLKQGQGL…AGHVNPVKAN (479 aa). Catalysis depends on charge relay system residues Asp147 and His206. The region spanning 365–454 is the PA domain; that stretch reads PLVYPGSFGY…VEVSYAAGLT (90 aa). Residues Asn376, Asn380, and Asn405 are each glycosylated (N-linked (GlcNAc...) asparagine). The Charge relay system role is filled by Ser533. N-linked (GlcNAc...) asparagine glycans are attached at residues Asn675 and Asn722.

This sequence belongs to the peptidase S8 family.

The protein localises to the secreted. Its subcellular location is the extracellular space. The protein resides in the apoplast. Required for arbuscular mycorrhiza (AM) development during AM symbiosis with AM fungi (e.g. Glomeromycota intraradices). The protein is Subtilisin-like protease of Medicago truncatula (Barrel medic).